Consider the following 258-residue polypeptide: tRNA pseudouridine synthase A (258 aa).

Residue D52 is the Nucleophile of the active site. Y110 contributes to the substrate binding site.

Belongs to the tRNA pseudouridine synthase TruA family. In terms of assembly, homodimer.

It carries out the reaction uridine(38/39/40) in tRNA = pseudouridine(38/39/40) in tRNA. In terms of biological role, formation of pseudouridine at positions 38, 39 and 40 in the anticodon stem and loop of transfer RNAs. The chain is tRNA pseudouridine synthase A from Francisella tularensis subsp. mediasiatica (strain FSC147).